Reading from the N-terminus, the 165-residue chain is PARP-type zinc finger-containing protein C13F5.07c (165 aa).

A PARP-type; degenerate zinc finger spans residues 8 to 100 (YRIEIAPNNR…KVVDAINEGH (93 aa)). Residues 100-114 (HVSESDERESRKLGE) are compositionally biased toward basic and acidic residues. The tract at residues 100-165 (HVSESDERES…TDGSEAYEDD (66 aa)) is disordered. The span at 117-128 (NVNSQKLKTSSP) shows a compositional bias: polar residues. Basic residues predominate over residues 131-141 (VVRKNKRHHTT). Residues 149-165 (SDLDAEFTDGSEAYEDD) are compositionally biased toward acidic residues.

It localises to the cytoplasm. It is found in the nucleus. The chain is PARP-type zinc finger-containing protein C13F5.07c from Schizosaccharomyces pombe (strain 972 / ATCC 24843) (Fission yeast).